We begin with the raw amino-acid sequence, 267 residues long: Interleukin-15 receptor subunit alpha (267 aa).

The N-terminal stretch at 1–30 (MAPRRARGCRTLGLPALLLLLLLRPPATRG) is a signal peptide. The region spanning 31-95 (ITCPPPMSVE…WTTPSLKCIR (65 aa)) is the Sushi domain. The Extracellular portion of the chain corresponds to 31–205 (ITCPPPMSVE…VYPQGHSDTT (175 aa)). 2 disulfides stabilise this stretch: C33–C75 and C59–C93. The segment at 102–178 (QRPAPPSTVT…ESSHGTPSQT (77 aa)) is disordered. Residues 108 to 124 (STVTTAGVTPQPESLSP) show a composition bias toward polar residues. Low complexity predominate over residues 129-145 (PAASSPSSNNTAATTAA). An N-linked (GlcNAc...) asparagine glycan is attached at N137. Residues 152 to 165 (LMPSKSPSTGTTEI) show a composition bias toward polar residues. The helical transmembrane segment at 206-228 (VAISTSTVLLCGLSAVSLLACYL) threads the bilayer. The Cytoplasmic portion of the chain corresponds to 229–267 (KSRQTPPLASVEMEAMEALPVTWGTSSRDEDLENCSHHL).

In terms of assembly, the interleukin-15 receptor IL15R is a heterotrimer of IL15RA, IL2RB and IL2RG. IL15RA also self-associates. Interacts with SYK. Post-translationally, N-glycosylated and O-glycosylated. A soluble form (sIL-15RA) arises from proteolytic shedding of the membrane-anchored receptor. It also binds IL-15 and thus interferes with IL-15 binding to the membrane receptor. In terms of tissue distribution, expressed in neutrophils (at protein level). Expressed in fetal brain with higher expression in the hippocampus and cerebellum than in cortex and thalamus. Higher levels of soluble sIL-15RA form in comparison with membrane-bound forms is present in all brain structures. Isoforms 1, 3, 4, 5, 6, 7, 8 and 9: Widely expressed.

The protein localises to the membrane. It is found in the nucleus membrane. The protein resides in the cell surface. Its subcellular location is the endoplasmic reticulum membrane. It localises to the golgi apparatus membrane. The protein localises to the cytoplasmic vesicle membrane. It is found in the secreted. The protein resides in the extracellular space. In terms of biological role, high-affinity receptor for interleukin-15. Can signal both in cis and trans where IL15R from one subset of cells presents IL15 to neighboring IL2RG-expressing cells. In neutrophils, binds and activates kinase SYK in response to IL15 stimulation. In neutrophils, required for IL15-induced phagocytosis in a SYK-dependent manner. Expression of different isoforms may alter or interfere with signal transduction. Its function is as follows. Does not bind IL15. The protein is Interleukin-15 receptor subunit alpha (IL15RA) of Homo sapiens (Human).